Consider the following 77-residue polypeptide: Translation initiation factor IF-1, chloroplastic (77 aa).

An S1-like domain is found at Met-1–Arg-71.

Belongs to the IF-1 family. As to quaternary structure, component of the 30S ribosomal translation pre-initiation complex which assembles on the 30S ribosome in the order IF-2 and IF-3, IF-1 and N-formylmethionyl-tRNA(fMet); mRNA recruitment can occur at any time during PIC assembly.

It localises to the plastid. Its subcellular location is the chloroplast. In terms of biological role, one of the essential components for the initiation of protein synthesis. Stabilizes the binding of IF-2 and IF-3 on the 30S subunit to which N-formylmethionyl-tRNA(fMet) subsequently binds. Helps modulate mRNA selection, yielding the 30S pre-initiation complex (PIC). Upon addition of the 50S ribosomal subunit IF-1, IF-2 and IF-3 are released leaving the mature 70S translation initiation complex. The chain is Translation initiation factor IF-1, chloroplastic from Cabomba caroliniana (Carolina fanwort).